We begin with the raw amino-acid sequence, 78 residues long: Large ribosomal subunit protein bL28 (78 aa).

This sequence belongs to the bacterial ribosomal protein bL28 family.

The chain is Large ribosomal subunit protein bL28 from Colwellia psychrerythraea (strain 34H / ATCC BAA-681) (Vibrio psychroerythus).